Reading from the N-terminus, the 570-residue chain is Sulfite reductase [NADPH] hemoprotein beta-component (570 aa).

Cys-434, Cys-440, Cys-479, and Cys-483 together coordinate [4Fe-4S] cluster. Cys-483 serves as a coordination point for siroheme.

The protein belongs to the nitrite and sulfite reductase 4Fe-4S domain family. Alpha(8)-beta(8). The alpha component is a flavoprotein, the beta component is a hemoprotein. The cofactor is siroheme. It depends on [4Fe-4S] cluster as a cofactor.

The enzyme catalyses hydrogen sulfide + 3 NADP(+) + 3 H2O = sulfite + 3 NADPH + 4 H(+). It functions in the pathway sulfur metabolism; hydrogen sulfide biosynthesis; hydrogen sulfide from sulfite (NADPH route): step 1/1. Its function is as follows. Component of the sulfite reductase complex that catalyzes the 6-electron reduction of sulfite to sulfide. This is one of several activities required for the biosynthesis of L-cysteine from sulfate. The polypeptide is Sulfite reductase [NADPH] hemoprotein beta-component (Salmonella newport (strain SL254)).